Consider the following 288-residue polypeptide: Polyamine aminopropyltransferase (288 aa).

A PABS domain is found at 9–238; sequence ETLHDQFGQY…GIMTFAWATD (230 aa). Gln33 contributes to the S-methyl-5'-thioadenosine binding site. 2 residues coordinate spermidine: His64 and Asp88. Residues Glu108 and 140 to 141 each bind S-methyl-5'-thioadenosine; that span reads DG. Asp158 (proton acceptor) is an active-site residue. A spermidine-binding site is contributed by 158–161; sequence DCTD. Pro165 is an S-methyl-5'-thioadenosine binding site.

This sequence belongs to the spermidine/spermine synthase family. In terms of assembly, homodimer or homotetramer.

The protein resides in the cytoplasm. It catalyses the reaction S-adenosyl 3-(methylsulfanyl)propylamine + putrescine = S-methyl-5'-thioadenosine + spermidine + H(+). Its pathway is amine and polyamine biosynthesis; spermidine biosynthesis; spermidine from putrescine: step 1/1. Its function is as follows. Catalyzes the irreversible transfer of a propylamine group from the amino donor S-adenosylmethioninamine (decarboxy-AdoMet) to putrescine (1,4-diaminobutane) to yield spermidine. The polypeptide is Polyamine aminopropyltransferase (Escherichia fergusonii (strain ATCC 35469 / DSM 13698 / CCUG 18766 / IAM 14443 / JCM 21226 / LMG 7866 / NBRC 102419 / NCTC 12128 / CDC 0568-73)).